The sequence spans 372 residues: Glutamate 5-kinase (372 aa).

Residue Lys14 participates in ATP binding. Ser55, Asp142, and Asn154 together coordinate substrate. ATP contacts are provided by residues 174–175 (SD) and 216–222 (TGGMETK). A PUA domain is found at 279-357 (QGSIIVDLGA…WEIADVLGHK (79 aa)).

The protein belongs to the glutamate 5-kinase family.

It localises to the cytoplasm. It carries out the reaction L-glutamate + ATP = L-glutamyl 5-phosphate + ADP. Its pathway is amino-acid biosynthesis; L-proline biosynthesis; L-glutamate 5-semialdehyde from L-glutamate: step 1/2. Functionally, catalyzes the transfer of a phosphate group to glutamate to form L-glutamate 5-phosphate. This chain is Glutamate 5-kinase, found in Carboxydothermus hydrogenoformans (strain ATCC BAA-161 / DSM 6008 / Z-2901).